Consider the following 354-residue polypeptide: Probable disease resistance protein At5g45490 (354 aa).

The stretch at 33-53 (AKGNLEKKRDDNEEEERLKTE) forms a coiled coil. The 78-residue stretch at 45 to 122 (EEEERLKTES…VYAPRVWVSM (78 aa)) folds into the NB-ARC domain. An ATP-binding site is contributed by 91–98 (GEYGVGKT). The segment at 328-354 (DDEVGPVGSTHGQTDSSNRQPANQASS) is disordered. The span at 337 to 354 (THGQTDSSNRQPANQASS) shows a compositional bias: polar residues.

Its function is as follows. Possible disease resistance protein. This chain is Probable disease resistance protein At5g45490, found in Arabidopsis thaliana (Mouse-ear cress).